A 301-amino-acid chain; its full sequence is N-carbamoylputrescine amidase (301 aa).

The 259-residue stretch at 11–269 folds into the CN hydrolase domain; it reads VSVAAVQFAC…EDVLVAEFDL (259 aa). E50 functions as the Proton acceptor in the catalytic mechanism. K123 (proton donor) is an active-site residue. The Nucleophile role is filled by C160.

This sequence belongs to the carbon-nitrogen hydrolase superfamily. Homooctamer.

The enzyme catalyses N-carbamoylputrescine + H2O + 2 H(+) = putrescine + NH4(+) + CO2. It participates in amine and polyamine biosynthesis; putrescine biosynthesis via agmatine pathway; putrescine from N-carbamoylputrescine (amidase route): step 1/1. Involved in polyamine biosynthesis. In Oryza sativa subsp. japonica (Rice), this protein is N-carbamoylputrescine amidase (CPA).